A 219-amino-acid chain; its full sequence is Adenylate kinase (219 aa).

12 to 17 contacts ATP; that stretch reads GAGKGT. An NMP region spans residues 32–61; the sequence is STGDMLRAAVKAGTPIGLQAKAVMDAGELV. Residues T33, R38, 59 to 61, 87 to 90, and Q94 contribute to the AMP site; these read ELV and GYPR. The segment at 128 to 165 is LID; it reads GRFSCARCGEGYHDRYKLPKVADICDVCGSKEFKRRPD. R129 is a binding site for ATP. Positions 132, 135, 152, and 155 each coordinate Zn(2+). Positions 162 and 174 each coordinate AMP. ATP is bound at residue A202.

This sequence belongs to the adenylate kinase family. Monomer.

Its subcellular location is the cytoplasm. The catalysed reaction is AMP + ATP = 2 ADP. The protein operates within purine metabolism; AMP biosynthesis via salvage pathway; AMP from ADP: step 1/1. Functionally, catalyzes the reversible transfer of the terminal phosphate group between ATP and AMP. Plays an important role in cellular energy homeostasis and in adenine nucleotide metabolism. This Sphingopyxis alaskensis (strain DSM 13593 / LMG 18877 / RB2256) (Sphingomonas alaskensis) protein is Adenylate kinase.